Here is a 172-residue protein sequence, read N- to C-terminus: Thioredoxin M5, chloroplastic (172 aa).

The N-terminal 59 residues, 1 to 59 (MALETCFRAWATLHAPQPPSSGGSRDRLLLSGAGSSQSKPRLSVASPSPLRPASRFACQ), are a transit peptide targeting the chloroplast. The interval 17–47 (QPPSSGGSRDRLLLSGAGSSQSKPRLSVASP) is disordered. A Thioredoxin domain is found at 60-171 (CSNVVDEVVV…LATIIDKYVS (112 aa)). Catalysis depends on nucleophile residues cysteine 95 and cysteine 98. Residues cysteine 95 and cysteine 98 are joined by a disulfide bond.

It belongs to the thioredoxin family. Plant M-type subfamily. As to expression, expressed in leaves and at lower levels in flowers.

It localises to the plastid. The protein resides in the chloroplast. Its function is as follows. Thiol-disulfide oxidoreductase probably involved in the redox regulation of chloroplastic enzymes. Required for chloroplast biogenesis and differentiation. Functions as an electron donor for plastidial 2-Cys peroxiredoxins and participates in hydrogen peroxide scavenging system in chloroplasts. Possesses reducing activity towards insulin disulfide bonds. This is Thioredoxin M5, chloroplastic (TRXM) from Oryza sativa subsp. japonica (Rice).